Reading from the N-terminus, the 226-residue chain is MDTAELVALLHLASPALPIGAFSYSQGLEAALDAPLIRDADGARDWIASGLADVLAQGELPFLAHQLARWHAHDAAALADANDEFVASRESFELRRETEQMGWSLAQLCASLEWGDAARRATLASIPSVALPSAFAFAAAAHGATPDAALAAYAFGWVENQTAAAIKAVPLGQLAGQKIIVALREPIRDAVRRALATPPEAINTFAPQLGILSARHESQYSRLFRS.

It belongs to the UreF family. UreD, UreF and UreG form a complex that acts as a GTP-hydrolysis-dependent molecular chaperone, activating the urease apoprotein by helping to assemble the nickel containing metallocenter of UreC. The UreE protein probably delivers the nickel.

The protein localises to the cytoplasm. Functionally, required for maturation of urease via the functional incorporation of the urease nickel metallocenter. In Burkholderia mallei (strain NCTC 10247), this protein is Urease accessory protein UreF.